A 315-amino-acid chain; its full sequence is T cell receptor beta chain MC.7.G5 (315 aa).

Positions 1 to 21 are cleaved as a signal peptide; that stretch reads MTIRLLCYMGFYFLGAGLMEA. The Ig-like V-type domain maps to 22–114; that stretch reads DIYQTPRYLV…TSQYLCASSE (93 aa). The tract at residues 22-114 is t cell receptor beta variable 25-1; sequence DIYQTPRYLV…TSQYLCASSE (93 aa). A disulfide bond links cysteine 42 and cysteine 110. A CDR1 region spans residues 46–50; sequence MGHDK. The CDR2 stretch occupies residues 68 to 73; the sequence is SYGVNS. N-linked (GlcNAc...) asparagine glycosylation is present at asparagine 72. Positions 110 to 127 are CDR3; the sequence is CASSEARGLAEFTDTQYF. A t cell receptor beta joining 2-3 region spans residues 122–136; that stretch reads TDTQYFGPGTRLTVL. The tract at residues 138-315 is t cell receptor beta constant 2; the sequence is DLKNVFPPEV…AMVKRKDSRG (178 aa). The Ig-like C1-type domain occupies 145–254; it reads PEVAVFEPSE…WTQDRAKPVT (110 aa). Cysteine 167 and cysteine 232 are oxidised to a cystine. Asparagine 206 carries N-linked (GlcNAc...) asparagine glycosylation. The interval 267 to 281 is connecting peptide; sequence CGFTSESYQQGVLSA. The helical transmembrane segment at 282–304 threads the bilayer; sequence TILYEILLGKATLYAVLVSALVL. The Cytoplasmic portion of the chain corresponds to 305 to 315; it reads MAMVKRKDSRG.

Disulfide-linked heterodimer with TRAV38-2DV8*01J31*01C*01 alpha chain. The alpha-beta TR associates with the transmembrane signaling CD3 coreceptor proteins to form the TR-CD3 (TCR). The assembly of alpha-beta TR heterodimers with CD3 occurs in the endoplasmic reticulum where a single alpha-beta TR heterodimer associates with one CD3D-CD3E heterodimer, one CD3G-CD3E heterodimer and one CD247 homodimer forming a stable octameric structure. CD3D-CD3E and CD3G-CD3E heterodimers preferentially associate with TR alpha and TR beta chains (via TM domain), respectively. The association of the CD247 homodimer is the last step of TCR assembly in the endoplasmic reticulum and is required for transport to the cell surface. Expressed in MR1-restricted CD8-positive T cells.

Its subcellular location is the cell membrane. In terms of biological role, the beta chain of TRAV38-2DV8*01J31*01C*01/TRBV25-1*01J2S3*01C2*01 alpha-beta T cell receptor (TR) clonotype that displays pan-cancer cell recognition via the invariant MR1 molecule. On CD8-positive T cell clone MC.7.G5, likely recognizes tumor-specific or -associated metabolite(s) essential for cancer cell survival, triggering killing of many cancer cell types including lung, melanoma, leukemia, colon, breast, prostate, bone and ovarian cancer cells. Mediates cancer cell cytotoxicity in an HLA-independent manner. Has no reactivity to healthy cells even stressed or infected by bacteria. Antigen recognition initiates TR-CD3 clustering on the cell surface and intracellular activation of LCK that phosphorylates the ITAM motifs of CD3G, CD3D, CD3E and CD247 enabling the recruitment of ZAP70. In turn, ZAP70 phosphorylates LAT, which recruits numerous signaling molecules to form the LAT signalosome. The LAT signalosome propagates signal branching to three major signaling pathways, the calcium, the mitogen-activated protein kinase (MAPK) kinase and the nuclear factor NF-kappa-B (NF-kB) pathways, leading to the mobilization of transcription factors that are critical for gene expression and essential for T cell differentiation into effector/memory T cells. The polypeptide is T cell receptor beta chain MC.7.G5 (Homo sapiens (Human)).